A 699-amino-acid polypeptide reads, in one-letter code: Kinesin-II 85 kDa subunit (699 aa).

Residues 10–342 (NVRVVVRCRP…LRYANRAKNI (333 aa)) form the Kinesin motor domain. 97 to 104 (GQTGTGKT) serves as a coordination point for ATP. A coiled-coil region spans residues 341 to 619 (NIKNKAKINE…EDIGEWQLKC (279 aa)). Disordered regions lie at residues 369–415 (KQIS…LSPE), 432–456 (EEKKDMVEEDRNTVHRELQRRESEL), and 660–699 (GMKYKPSQGKSGRPKTSSGRPKTGKKKQASMASSIDALLQ). A compositionally biased stretch (acidic residues) spans 376–395 (EGLDDDEESGSEESGDEEAG). Residues 400 to 411 (KKKRKGKNPKRK) show a composition bias toward basic residues. The globular stretch occupies residues 620–699 (VAYTGNNMRK…MASSIDALLQ (80 aa)). A compositionally biased stretch (polar residues) spans 667–679 (QGKSGRPKTSSGR).

This sequence belongs to the TRAFAC class myosin-kinesin ATPase superfamily. Kinesin family. Kinesin II subfamily. Heterotrimer of a 115 kDa subunit (KAP115) and two kinesin-like subunits of 95 kDa (KRP95) and 85 kDa (KRP85). In terms of processing, the N-terminus is blocked.

It is found in the cytoplasm. The protein resides in the cytoskeleton. This chain is Kinesin-II 85 kDa subunit (KRP85), found in Strongylocentrotus purpuratus (Purple sea urchin).